The sequence spans 316 residues: ATP synthase gamma chain (316 aa).

Belongs to the ATPase gamma chain family. F-type ATPases have 2 components, CF(1) - the catalytic core - and CF(0) - the membrane proton channel. CF(1) has five subunits: alpha(3), beta(3), gamma(1), delta(1), epsilon(1). CF(0) has three main subunits: a, b and c.

The protein resides in the cellular thylakoid membrane. Its function is as follows. Produces ATP from ADP in the presence of a proton gradient across the membrane. The gamma chain is believed to be important in regulating ATPase activity and the flow of protons through the CF(0) complex. The sequence is that of ATP synthase gamma chain from Prochlorococcus marinus (strain MIT 9303).